The sequence spans 463 residues: 6-phosphofructo-2-kinase/fructose-2,6-bisphosphatase 3 (463 aa).

The segment at 1-246 (MPLELTQSRV…VYYLMNIHWQ (246 aa)) is 6-phosphofructo-2-kinase. 42-50 (GLPARGKTY) contacts ATP. 2 residues coordinate beta-D-fructose 6-phosphate: arginine 75 and arginine 99. The active site involves aspartate 125. 2 residues coordinate beta-D-fructose 6-phosphate: threonine 127 and arginine 133. Cysteine 155 is a catalytic residue. 164–169 (NIMEVK) is an ATP binding site. 3 residues coordinate beta-D-fructose 6-phosphate: lysine 169, arginine 191, and tyrosine 195. Residues 247–463 (PRTIYLCRHG…PNPLMRSNSH (217 aa)) are fructose-2,6-bisphosphatase. Residue arginine 254 participates in beta-D-fructose 2,6-bisphosphate binding. Histidine 255 functions as the Tele-phosphohistidine intermediate in the catalytic mechanism. Residues asparagine 261 and glycine 267 each contribute to the beta-D-fructose 2,6-bisphosphate site. The active-site Proton donor/acceptor is the glutamate 324. Beta-D-fructose 2,6-bisphosphate is bound at residue tyrosine 335. 346–349 (YALA) serves as a coordination point for ATP. Residues lysine 353, tyrosine 364, and glutamine 390 each coordinate beta-D-fructose 2,6-bisphosphate. ATP-binding positions include 390 to 394 (QAVCV) and tyrosine 426. The disordered stretch occupies residues 444-463 (RERSEDAKKGPNPLMRSNSH). Serine 462 carries the post-translational modification Phosphoserine; by AMPK and PKA.

This sequence in the C-terminal section; belongs to the phosphoglycerate mutase family. In terms of assembly, homodimer. Forms a heterodimer with PFKFB2. In terms of processing, phosphorylation by AMPK stimulates activity. In terms of tissue distribution, brain.

It carries out the reaction beta-D-fructose 2,6-bisphosphate + H2O = beta-D-fructose 6-phosphate + phosphate. The catalysed reaction is beta-D-fructose 6-phosphate + ATP = beta-D-fructose 2,6-bisphosphate + ADP + H(+). In terms of biological role, catalyzes both the synthesis and degradation of fructose 2,6-bisphosphate. The sequence is that of 6-phosphofructo-2-kinase/fructose-2,6-bisphosphatase 3 (PFKFB3) from Bos taurus (Bovine).